A 102-amino-acid polypeptide reads, in one-letter code: Small ribosomal subunit protein uS10 (102 aa).

The protein belongs to the universal ribosomal protein uS10 family. Part of the 30S ribosomal subunit.

In terms of biological role, involved in the binding of tRNA to the ribosomes. The sequence is that of Small ribosomal subunit protein uS10 from Lactobacillus delbrueckii subsp. bulgaricus (strain ATCC 11842 / DSM 20081 / BCRC 10696 / JCM 1002 / NBRC 13953 / NCIMB 11778 / NCTC 12712 / WDCM 00102 / Lb 14).